The chain runs to 1388 residues: DNA-directed RNA polymerase subunit beta' (1388 aa).

Cys70, Cys72, Cys85, and Cys88 together coordinate Zn(2+). Asp461, Asp463, and Asp465 together coordinate Mg(2+). Positions 808, 882, 889, and 892 each coordinate Zn(2+).

The protein belongs to the RNA polymerase beta' chain family. In terms of assembly, the RNAP catalytic core consists of 2 alpha, 1 beta, 1 beta' and 1 omega subunit. When a sigma factor is associated with the core the holoenzyme is formed, which can initiate transcription. Requires Mg(2+) as cofactor. The cofactor is Zn(2+).

It carries out the reaction RNA(n) + a ribonucleoside 5'-triphosphate = RNA(n+1) + diphosphate. Functionally, DNA-dependent RNA polymerase catalyzes the transcription of DNA into RNA using the four ribonucleoside triphosphates as substrates. In Acidiphilium cryptum (strain JF-5), this protein is DNA-directed RNA polymerase subunit beta'.